The chain runs to 877 residues: Dystroglycan 1 (877 aa).

Positions 1 to 29 (MRMSAGLSLLIPLWGRTFLLLLSVAVTQS) are cleaved as a signal peptide. Residues 30 to 408 (RWPSEPSDAV…GHIRPTMTIP (379 aa)) form a required for laminin recognition region. The segment at 49 to 71 (SMHSVLSDLHEAVPTVVGIPDGT) is O-glycosylated at one site. Asn-141 is a glycosylation site (N-linked (GlcNAc...) asparagine). A disulfide bond links Cys-182 and Cys-264. Positions 316 to 468 (ATPTPVTAIG…PPTRIRTTTS (153 aa)) are mucin-like domain. 3 O-linked (Man6P...) threonine glycosylation sites follow: Thr-317, Thr-319, and Thr-379. Disordered regions lie at residues 380–444 (PTLG…PVPR) and 458–480 (SPPT…QRPE). The segment covering 413-433 (PTAVATPPTPTTKNPRVSXPT) has biased composition (low complexity). Residues 446-468 (TTKAPITRLETASPPTRIRTTTS) are O-glycosylated at seven sites with GalNAc. The Peptidase S72 domain occupies 585 to 694 (RAPARFTAKF…MSIAVTGSGS (110 aa)). N-linked (GlcNAc...) asparagine glycosylation is found at Asn-623, Asn-631, and Asn-643. The cysteines at positions 651 and 695 are disulfide-linked. Positions 706 to 717 (PKRVPSEAPPTE) are enriched in pro residues. Residues 706-727 (PKRVPSEAPPTEVPDRDPEKSS) form a disordered region. A compositionally biased stretch (basic and acidic residues) spans 718 to 727 (VPDRDPEKSS). Residues 732 to 757 (YLHTVIPAVVVAAILLIAGIIAMICY) form a helical membrane-spanning segment. The Nuclear localization signal signature appears at 758 to 764 (RKKRKGK). Thr-772 is modified (phosphothreonine). Residues 801-877 (LQEEKAPLPP…YRSPPPYVPP (77 aa)) are required for interaction with CAV3. The interval 805–877 (KAPLPPPEYP…YRSPPPYVPP (73 aa)) is disordered. The span at 814–828 (PNQSVPETTPLNQDT) shows a compositional bias: polar residues. Residues 841–852 (NAPPYQPPPPFT) are compositionally biased toward pro residues. Residues 862-877 (PKNMTPYRSPPPYVPP) form a required for binding DMD and UTRN region. The short motif at 871 to 874 (PPPY) is the PPXY motif element. Tyr-874 carries the post-translational modification Phosphotyrosine; by SRC.

In terms of assembly, monomer. Heterodimer of alpha- and beta-dystroglycan subunits which are the central components of the dystrophin-glycoprotein complex. This complex then can form a dystrophin-associated glycoprotein complex (DGC) which is composed of three subcomplexes: a cytoplasmic complex comprised of DMD (or UTRN), DTNA and a number of syntrophins, such as SNTB1, SNTB2, SNTG1 and SNTG2, the transmembrane dystroglycan complex, and the sarcoglycan-sarcospan complex. Interacts (via the N-terminal of alphaDAG1) with LARGE1; the interaction enhances laminin binding. Interacts with SGCD. Interacts with AGR2 and AGR3. Interacts (betaDAG1) with DMD; the interaction is inhibited by phosphorylation on the PPXY motif. Interacts (betaDAG1, via its PPXY motif) with UTRN (via its WWW and ZZ domains); the interaction is inhibited by phosphorylation on the PPXY motif. Interacts (betaDAG1, via its phosphorylated PPXY motif) with the SH2 domain-containing proteins, FYN, CSK, NCK and SHC. Interacts (betaDAG1) with CAV3 (via a central WW-like domain); the interaction disrupts the binding of DMD. BetaDAG1 directly interacts with ANK3, but not with ANK2; this interaction does not interfere with DMD-binding and is required for retention at costameres. Identified in a dystroglycan complex that contains at least PRX, DRP2, UTRN, DMD and DAG1. Interacts with POMGNT1. BetaDAG1 interacts with CD93. O-glycosylated. POMGNT1 catalyzes the initial addition of N-acetylglucosamine, giving rise to the GlcNAc(beta1-2)Man(alpha1-)O-Ser/Thr moiety and thus providing the necessary basis for the addition of further carbohydrate moieties. Heavily O-glycosylated comprising of up to two thirds of its mass and the carbohydrate composition differs depending on tissue type. Mucin-type O-glycosylation is important for ligand binding activity. O-mannosylation of alpha-DAG1 is found in high abundance in both brain and muscle where the most abundant glycan is Sia-alpha-2-3-Gal-beta-1-4-Glc-NAc-beta-1-2-Man. In muscle, glycosylation on Thr-317, Thr-319 and Thr-379 by a phosphorylated O-mannosyl glycan with the structure 2-(N-acetylamido)-2-deoxygalactosyl-beta-1,3-2-(N-acetylamido)-2-deoxyglucosyl-beta-1,4-6-phosphomannose is mediated by like-acetylglucosaminyltransferase (LARGE1) protein amd is required for laminin binding. O-glycosylated in the N-terminal region with a core 1 or possibly core 8 glycan. The brain form displays a unique glycosylation pattern which is absent in other tissues; this form shows enhanced binding to laminin LAMA5 compared to the skeletal muscle form. In terms of processing, N-glycosylated. Post-translationally, autolytic cleavage produces the alpha and beta subunits. In cutaneous cells, as well as in certain pathological conditions, shedding of beta-dystroglycan can occur releasing a peptide of about 30 kDa. SRC-mediated phosphorylation of the PPXY motif of the beta subunit recruits SH2 domain-containing proteins, but inhibits binding to WWW domain-containing proteins, DMD and UTRN. This phosphorylation also inhibits nuclear entry.

Its subcellular location is the secreted. It is found in the extracellular space. The protein resides in the cell membrane. It localises to the cytoplasm. The protein localises to the cytoskeleton. Its subcellular location is the nucleus. It is found in the nucleoplasm. The protein resides in the sarcolemma. It localises to the postsynaptic cell membrane. In terms of biological role, the dystroglycan complex is involved in a number of processes including laminin and basement membrane assembly, sarcolemmal stability, cell survival, peripheral nerve myelination, nodal structure, cell migration, and epithelial polarization. Functionally, extracellular peripheral glycoprotein that acts as a receptor for extracellular matrix proteins containing laminin-G domains. Receptor for laminin-2 (LAMA2) and agrin in peripheral nerve Schwann cells. Also acts as a receptor for laminin LAMA5. Its function is as follows. Transmembrane protein that plays important roles in connecting the extracellular matrix to the cytoskeleton. Acts as a cell adhesion receptor in both muscle and non-muscle tissues. Receptor for both DMD and UTRN and, through these interactions, scaffolds axin to the cytoskeleton. Also functions in cell adhesion-mediated signaling and implicated in cell polarity. The polypeptide is Dystroglycan 1 (Sus scrofa (Pig)).